A 264-amino-acid polypeptide reads, in one-letter code: Sirohydrochlorin cobaltochelatase (264 aa).

The Co-sirohydrochlorin site is built by glycine 45, isoleucine 84, isoleucine 85, aspartate 88, glutamate 89, and lysine 92. The active-site Proton acceptor is histidine 145. 2 residues coordinate Co(2+): histidine 145 and glutamate 175. Leucine 202, valine 203, and histidine 207 together coordinate Co-sirohydrochlorin. Histidine 207 contributes to the Co(2+) binding site.

Belongs to the CbiK family. Homotrimer.

It catalyses the reaction Co-sirohydrochlorin + 2 H(+) = sirohydrochlorin + Co(2+). The catalysed reaction is Co-precorrin-2 + 3 H(+) = precorrin-2 + Co(2+). It functions in the pathway cofactor biosynthesis; adenosylcobalamin biosynthesis; cob(II)yrinate a,c-diamide from sirohydrochlorin (anaerobic route): step 1/10. Functionally, cobalt chelatase responsible for the insertion of cobalt during anaerobic cobalamin biosynthesis. Can catalyze the insertion of Co(2+) into either sirohydrochlorin or precorrin-2. It is not clear which is the natural substrate in Salmonella. The sequence is that of Sirohydrochlorin cobaltochelatase from Salmonella typhimurium (strain LT2 / SGSC1412 / ATCC 700720).